A 577-amino-acid polypeptide reads, in one-letter code: Arginine--tRNA ligase (577 aa).

Residues 122–132 (PNVAKEMHVGH) carry the 'HIGH' region motif.

It belongs to the class-I aminoacyl-tRNA synthetase family. As to quaternary structure, monomer.

It localises to the cytoplasm. The catalysed reaction is tRNA(Arg) + L-arginine + ATP = L-arginyl-tRNA(Arg) + AMP + diphosphate. The polypeptide is Arginine--tRNA ligase (Citrobacter koseri (strain ATCC BAA-895 / CDC 4225-83 / SGSC4696)).